We begin with the raw amino-acid sequence, 66 residues long: Large ribosomal subunit protein bL33c (66 aa).

Belongs to the bacterial ribosomal protein bL33 family.

The protein localises to the plastid. It localises to the chloroplast. The sequence is that of Large ribosomal subunit protein bL33c from Nasturtium officinale (Watercress).